Reading from the N-terminus, the 856-residue chain is Putative zinc protease C28F5.4 (856 aa).

His71 contributes to the Zn(2+) binding site. The Proton acceptor role is filled by Glu74. Zn(2+) is bound by residues His75 and Glu152.

Belongs to the peptidase M16 family.

The protein is Putative zinc protease C28F5.4 of Caenorhabditis elegans.